We begin with the raw amino-acid sequence, 101 residues long: Protein Tat (101 aa).

Residues 1–12 (MDPVDPRLEPWK) show a composition bias toward basic and acidic residues. The segment at 1–20 (MDPVDPRLEPWKHPGSQPKA) is disordered. Residues 1–24 (MDPVDPRLEPWKHPGSQPKAACTS) form an interaction with human CREBBP region. The interval 1 to 48 (MDPVDPRLEPWKHPGSQPKAACTSCYCKKCCFHCQVCFTTKGLGISYG) is transactivation. Positions 22, 25, and 27 each coordinate Zn(2+). Residues 22-37 (CTSCYCKKCCFHCQVC) are cysteine-rich. An N6-acetyllysine; by host PCAF modification is found at Lys-28. The Zn(2+) site is built by Cys-30, His-33, Cys-34, and Cys-37. Positions 38–48 (FTTKGLGISYG) are core. A compositionally biased stretch (basic residues) spans 48-57 (GRKKRRQRRR). The tract at residues 48–101 (GRKKRRQRRRAPQDSQTHQVSLPKQPASQARGDPTGPKESKKKVERETETDPVD) is disordered. Residues 49-57 (RKKRRQRRR) carry the Nuclear localization signal, RNA-binding (TAR), and protein transduction motif. Positions 49 to 86 (RKKRRQRRRAPQDSQTHQVSLPKQPASQARGDPTGPKE) are interaction with the host capping enzyme RNGTT. Lys-50 and Lys-51 each carry N6-acetyllysine; by host EP300 and GCN5L2. Asymmetric dimethylarginine; by host PRMT6 is present on residues Arg-52 and Arg-53. Residues 60 to 75 (QDSQTHQVSLPKQPAS) are compositionally biased toward polar residues. Residue Lys-71 forms a Glycyl lysine isopeptide (Lys-Gly) (interchain with G-Cter in ubiquitin) linkage. Positions 78-80 (RGD) match the Cell attachment site motif. Basic and acidic residues predominate over residues 83–101 (GPKESKKKVERETETDPVD).

It belongs to the lentiviruses Tat family. As to quaternary structure, interacts with host CCNT1. Associates with the P-TEFb complex composed at least of Tat, P-TEFb (CDK9 and CCNT1), TAR RNA, RNA Pol II. Recruits the HATs CREBBP, TAF1/TFIID, EP300, PCAF and GCN5L2. Interacts with host KAT5/Tip60; this interaction targets the latter to degradation. Interacts with the host deacetylase SIRT1. Interacts with host capping enzyme RNGTT; this interaction stimulates RNGTT. Binds to host KDR, and to the host integrins ITGAV/ITGB3 and ITGA5/ITGB1. Interacts with host KPNB1/importin beta-1 without previous binding to KPNA1/importin alpha-1. Interacts with EIF2AK2. Interacts with host nucleosome assembly protein NAP1L1; this interaction may be required for the transport of Tat within the nucleus, since the two proteins interact at the nuclear rim. Interacts with host C1QBP/SF2P32; this interaction involves lysine-acetylated Tat. Interacts with the host chemokine receptors CCR2, CCR3 and CXCR4. Interacts with host DPP4/CD26; this interaction may trigger an anti-proliferative effect. Interacts with host LDLR. Interacts with the host extracellular matrix metalloproteinase MMP1. Interacts with host PRMT6; this interaction mediates Tat's methylation. Interacts with, and is ubiquitinated by MDM2/Hdm2. Interacts with host PSMC3 and HTATIP2. Interacts with STAB1; this interaction may overcome SATB1-mediated repression of IL2 and IL2RA (interleukin) in T cells by binding to the same domain than HDAC1. Interacts (when acetylated) with human CDK13, thereby increasing HIV-1 mRNA splicing and promoting the production of the doubly spliced HIV-1 protein Nef. Interacts with host TBP; this interaction modulates the activity of transcriptional pre-initiation complex. Interacts with host RELA. Interacts with host PLSCR1; this interaction negatively regulates Tat transactivation activity by altering its subcellular distribution. Asymmetrical arginine methylation by host PRMT6 seems to diminish the transactivation capacity of Tat and affects the interaction with host CCNT1. Post-translationally, acetylation by EP300, CREBBP, GCN5L2/GCN5 and PCAF regulates the transactivation activity of Tat. EP300-mediated acetylation of Lys-50 promotes dissociation of Tat from the TAR RNA through the competitive binding to PCAF's bromodomain. In addition, the non-acetylated Tat's N-terminus can also interact with PCAF. PCAF-mediated acetylation of Lys-28 enhances Tat's binding to CCNT1. Lys-50 is deacetylated by SIRT1. In terms of processing, polyubiquitination by host MDM2 does not target Tat to degradation, but activates its transactivation function and fosters interaction with CCNT1 and TAR RNA. Phosphorylated by EIF2AK2 on serine and threonine residues adjacent to the basic region important for TAR RNA binding and function. Phosphorylation of Tat by EIF2AK2 is dependent on the prior activation of EIF2AK2 by dsRNA.

It localises to the host nucleus. It is found in the host nucleolus. Its subcellular location is the host cytoplasm. The protein resides in the secreted. Its function is as follows. Transcriptional activator that increases RNA Pol II processivity, thereby increasing the level of full-length viral transcripts. Recognizes a hairpin structure at the 5'-LTR of the nascent viral mRNAs referred to as the transactivation responsive RNA element (TAR) and recruits the cyclin T1-CDK9 complex (P-TEFb complex) that will in turn hyperphosphorylate the RNA polymerase II to allow efficient elongation. The CDK9 component of P-TEFb and other Tat-activated kinases hyperphosphorylate the C-terminus of RNA Pol II that becomes stabilized and much more processive. Other factors such as HTATSF1/Tat-SF1, SUPT5H/SPT5, and HTATIP2 are also important for Tat's function. Besides its effect on RNA Pol II processivity, Tat induces chromatin remodeling of proviral genes by recruiting the histone acetyltransferases (HATs) CREBBP, EP300 and PCAF to the chromatin. This also contributes to the increase in proviral transcription rate, especially when the provirus integrates in transcriptionally silent region of the host genome. To ensure maximal activation of the LTR, Tat mediates nuclear translocation of NF-kappa-B by interacting with host RELA. Through its interaction with host TBP, Tat may also modulate transcription initiation. Tat can reactivate a latently infected cell by penetrating in it and transactivating its LTR promoter. In the cytoplasm, Tat is thought to act as a translational activator of HIV-1 mRNAs. In terms of biological role, extracellular circulating Tat can be endocytosed by surrounding uninfected cells via the binding to several surface receptors such as CD26, CXCR4, heparan sulfate proteoglycans (HSPG) or LDLR. Neurons are rarely infected, but they internalize Tat via their LDLR. Through its interaction with nuclear HATs, Tat is potentially able to control the acetylation-dependent cellular gene expression. Modulates the expression of many cellular genes involved in cell survival, proliferation or in coding for cytokines or cytokine receptors. Tat plays a role in T-cell and neurons apoptosis. Tat induced neurotoxicity and apoptosis probably contribute to neuroAIDS. Circulating Tat also acts as a chemokine-like and/or growth factor-like molecule that binds to specific receptors on the surface of the cells, affecting many cellular pathways. In the vascular system, Tat binds to ITGAV/ITGB3 and ITGA5/ITGB1 integrins dimers at the surface of endothelial cells and competes with bFGF for heparin-binding sites, leading to an excess of soluble bFGF. The polypeptide is Protein Tat (Homo sapiens (Human)).